Consider the following 177-residue polypeptide: MPQAKKSTETLAPAPPGRSRSLLRSLPSPALCCACGLCVLLAGLNVTLVGAFAAFLPGHNVPLVVGPALLVLALGFFAACCVCSRRGPVPRARSSATAGQGGGRPGTVALEMESSERTAQDTTAVQLSPAASAASSGRSSPGPGLFALDPPAPATAAPYLPRTEGTQLNFPRDPAAS.

The disordered stretch occupies residues 1 to 20 (MPQAKKSTETLAPAPPGRSR). Transmembrane regions (helical) follow at residues 36–56 (GLCVLLAGLNVTLVGAFAAFL) and 63–83 (LVVGPALLVLALGFFAACCVC). The segment at 113–177 (ESSERTAQDT…LNFPRDPAAS (65 aa)) is disordered. The segment covering 128–161 (SPAASAASSGRSSPGPGLFALDPPAPATAAPYLP) has biased composition (low complexity).

It is found in the membrane. In Mus musculus (Mouse), this protein is Transmembrane protein 275.